A 356-amino-acid polypeptide reads, in one-letter code: Protein MGF 360-10L (356 aa).

An ANK repeat occupies 58–90; that stretch reads DLNTALMIAAKENNYQLIKLFTEWGANINYGYI. N-linked (GlcNAc...) asparagine; by host glycosylation is present at Asn125. Transmembrane regions (helical) follow at residues 206–228 and 249–271; these read LNTW…YLYE and NFLT…LAAI. Residue Asn352 is glycosylated (N-linked (GlcNAc...) asparagine; by host).

It belongs to the asfivirus MGF 360 family.

Its subcellular location is the host membrane. Plays a role in virus cell tropism, and may be required for efficient virus replication in macrophages. The sequence is that of Protein MGF 360-10L from Ornithodoros (relapsing fever ticks).